A 356-amino-acid chain; its full sequence is NADH-quinone oxidoreductase subunit H (356 aa).

The next 9 membrane-spanning stretches (helical) occupy residues 16 to 36, 52 to 72, 85 to 105, 117 to 137, 163 to 183, 201 to 221, 254 to 274, 295 to 315, and 334 to 354; these read IAVLQILAFAVVLLISLAFLL, PNVVGAFGLLQSFADFFKFVF, LYLLAPLITLILAFVTWAVVP, VGILYLFAMSSLGVYGIIIGG, IGFIIVTVLLFAGSMNLSEII, WPMPMFLVMIPMAVIFFISAL, FMVGEYLNIVLMCAMTAILFF, AWYFFWFAAKIVFFFFMFAMV, and IFLPISLAAVALVGAAVVYGP.

Belongs to the complex I subunit 1 family. In terms of assembly, NDH-1 is composed of 14 different subunits. Subunits NuoA, H, J, K, L, M, N constitute the membrane sector of the complex.

The protein resides in the cell inner membrane. It catalyses the reaction a quinone + NADH + 5 H(+)(in) = a quinol + NAD(+) + 4 H(+)(out). Functionally, NDH-1 shuttles electrons from NADH, via FMN and iron-sulfur (Fe-S) centers, to quinones in the respiratory chain. The immediate electron acceptor for the enzyme in this species is believed to be ubiquinone. Couples the redox reaction to proton translocation (for every two electrons transferred, four hydrogen ions are translocated across the cytoplasmic membrane), and thus conserves the redox energy in a proton gradient. This subunit may bind ubiquinone. The chain is NADH-quinone oxidoreductase subunit H from Maricaulis maris (strain MCS10) (Caulobacter maris).